We begin with the raw amino-acid sequence, 189 residues long: Methylated-DNA--protein-cysteine methyltransferase (189 aa).

Positions 128 and 142 each coordinate DNA. Cysteine 159 serves as the catalytic Nucleophile; methyl group acceptor. Residue serine 165 participates in DNA binding.

This sequence belongs to the MGMT family.

The protein resides in the nucleus. It carries out the reaction a 6-O-methyl-2'-deoxyguanosine in DNA + L-cysteinyl-[protein] = S-methyl-L-cysteinyl-[protein] + a 2'-deoxyguanosine in DNA. The enzyme catalyses a 4-O-methyl-thymidine in DNA + L-cysteinyl-[protein] = a thymidine in DNA + S-methyl-L-cysteinyl-[protein]. Functionally, involved in the cellular defense against the biological effects of O6-methylguanine (O6-MeG) and O4-methylthymine (O4-MeT) in DNA. Repairs the methylated nucleobase in DNA by stoichiometrically transferring the methyl group to a cysteine residue in the enzyme. This is a suicide reaction: the enzyme is irreversibly inactivated. The protein is Methylated-DNA--protein-cysteine methyltransferase (MGT1) of Kluyveromyces lactis (strain ATCC 8585 / CBS 2359 / DSM 70799 / NBRC 1267 / NRRL Y-1140 / WM37) (Yeast).